Reading from the N-terminus, the 1071-residue chain is MPKRTDLKSILIIGAGPIVIGQACEFDYSGAQACKALREEGYKVILVNSNPATIMTDPEMADVTYIEPIMWQTVEKIIAKERPDAILPTMGGQTALNCALDLARNGVLAKYNVELIGATEDAIDKAEDRGRFKEAMEKIGLSCPKSFVCHTMNEALAAQEQVGFPTLIRPSFTMGGSGGGIAYNKDEFLAICERGFDASPTHELLIEQSVLGWKEYEMEVVRDKNDNCIIICSIENFDPMGVHTGDSITVAPAQTLTDKEYQIMRNASLAVLREIGVDTGGSNVQFAVNPENGEMIVIEMNPRVSRSSALASKATGFPIAKVAAKLAVGFTLDELRNDITGGRTPASFEPSIDYVVTKIPRFAFEKFPAADDRLTTQMKSVGEVMAMGRTIQESFQKALRGLETGLCGFNPRSSDKAEIRRELANPGPERMLFVADAFRAGFTLEEIHEICAIDPWFLAQIEDLMKEEKAVSDGVLSDLDYAALRRLKRKGFSDKRIAQLLDVKEKEVREHRYVLNLHPVYKRVDTCAAEFATETAYLYSTYEEECEARPSDRKKVMILGGGPNRIGQGIEFDYCCVHAALALRESGFETIMVNCNPETVSTDFDTSDRLYFEPLTLEDVLEIVRTENPWGVIVHYGGQTPLKLANALVENGVNIIGTSADSIDAAEDRERFQKVLNDLGLRQPPNRIAHNEEEALVKAEEIGYPLVVRPSYVLGGRAMQIVHSAEQLQKYMREAVQVSEDSPVLLDFFLNNAIEVDVDCVSDGKDVVIGGIMQHVEQAGIHSGDSGCSLPPYSLSEEIQDEIRRQTKAMAYALGVVGLMNVQFAVQDGVVFVLEVNPRASRTVPFVSKATGVPLAKVGARCMAGISLKEQGVEKEVVPDFYAVKEAVFPFIKFPGVDTILGPEMRSTGEVMGVGASFGEAYYKAQLGAGERLNPTGKIFLSVREEDKERVIKTAKNFQALGYGICATRGTAQYLTEHGLIVQTINKVPEGRPHIGDALKNGEIALVVNTVSSDPQSVSDSHIIRQSALQQRVPQYTTTAGGEAMSEGAKSRDHLGVYSVQELHGRLKNRS.

The interval 1–403 is carboxyphosphate synthetic domain; it reads MPKRTDLKSI…SFQKALRGLE (403 aa). Residues R129, R169, G175, G176, Q208, V210, E215, G241, V242, H243, Q285, and E299 each coordinate ATP. Residues 133-328 enclose the ATP-grasp 1 domain; sequence KEAMEKIGLS…IAKVAAKLAV (196 aa). Q285, E299, and N301 together coordinate Mg(2+). Mn(2+)-binding residues include Q285, E299, and N301. The interval 404–548 is oligomerization domain; the sequence is TGLCGFNPRS…YSTYEEECEA (145 aa). A carbamoyl phosphate synthetic domain region spans residues 549-930; that stretch reads RPSDRKKVMI…AYYKAQLGAG (382 aa). Residues 673–864 enclose the ATP-grasp 2 domain; it reads QKVLNDLGLR…LAKVGARCMA (192 aa). Positions 709, 748, 750, 755, 780, 781, 782, 783, 823, and 835 each coordinate ATP. Residues Q823, E835, and N837 each coordinate Mg(2+). Positions 823, 835, and 837 each coordinate Mn(2+). In terms of domain architecture, MGS-like spans 931 to 1071; sequence ERLNPTGKIF…ELHGRLKNRS (141 aa). The tract at residues 931–1071 is allosteric domain; that stretch reads ERLNPTGKIF…ELHGRLKNRS (141 aa).

The protein belongs to the CarB family. In terms of assembly, composed of two chains; the small (or glutamine) chain promotes the hydrolysis of glutamine to ammonia, which is used by the large (or ammonia) chain to synthesize carbamoyl phosphate. Tetramer of heterodimers (alpha,beta)4. Mg(2+) is required as a cofactor. Requires Mn(2+) as cofactor.

The catalysed reaction is hydrogencarbonate + L-glutamine + 2 ATP + H2O = carbamoyl phosphate + L-glutamate + 2 ADP + phosphate + 2 H(+). It carries out the reaction hydrogencarbonate + NH4(+) + 2 ATP = carbamoyl phosphate + 2 ADP + phosphate + 2 H(+). It participates in amino-acid biosynthesis; L-arginine biosynthesis; carbamoyl phosphate from bicarbonate: step 1/1. It functions in the pathway pyrimidine metabolism; UMP biosynthesis via de novo pathway; (S)-dihydroorotate from bicarbonate: step 1/3. Its function is as follows. Large subunit of the glutamine-dependent carbamoyl phosphate synthetase (CPSase). CPSase catalyzes the formation of carbamoyl phosphate from the ammonia moiety of glutamine, carbonate, and phosphate donated by ATP, constituting the first step of 2 biosynthetic pathways, one leading to arginine and/or urea and the other to pyrimidine nucleotides. The large subunit (synthetase) binds the substrates ammonia (free or transferred from glutamine from the small subunit), hydrogencarbonate and ATP and carries out an ATP-coupled ligase reaction, activating hydrogencarbonate by forming carboxy phosphate which reacts with ammonia to form carbamoyl phosphate. This is Carbamoyl phosphate synthase large chain from Neisseria meningitidis serogroup A / serotype 4A (strain DSM 15465 / Z2491).